The chain runs to 479 residues: Glycerol kinase 5 (479 aa).

Residues Ser-20 and Ser-21 each coordinate ATP. Arg-90, Asp-267, and Gln-268 together coordinate glycerol. Thr-289, Gly-332, and Gly-432 together coordinate ATP.

The protein belongs to the FGGY kinase family.

The protein resides in the cytoplasm. The catalysed reaction is glycerol + ATP = sn-glycerol 3-phosphate + ADP + H(+). It participates in polyol metabolism; glycerol degradation via glycerol kinase pathway; sn-glycerol 3-phosphate from glycerol: step 1/1. Skin-specific kinase that plays a key role in glycerol metabolism, catalyzing its phosphorylation to produce sn-glycerol 3-phosphate. Involved in skin-specific regulation of sterol regulatory element-binding protein (SREBP) processing and lipid biosynthesis. This Xenopus laevis (African clawed frog) protein is Glycerol kinase 5 (gk5).